Reading from the N-terminus, the 297-residue chain is N-acetylneuraminate lyase (297 aa).

2 residues coordinate aceneuramate: serine 47 and threonine 48. Tyrosine 137 (proton donor) is an active-site residue. Lysine 165 serves as the catalytic Schiff-base intermediate with substrate. Aceneuramate contacts are provided by threonine 167, glycine 189, aspartate 191, glutamate 192, and serine 208.

This sequence belongs to the DapA family. NanA subfamily. Homotetramer.

The protein resides in the cytoplasm. It carries out the reaction aceneuramate = aldehydo-N-acetyl-D-mannosamine + pyruvate. It participates in amino-sugar metabolism; N-acetylneuraminate degradation; D-fructose 6-phosphate from N-acetylneuraminate: step 1/5. Catalyzes the reversible aldol cleavage of N-acetylneuraminic acid (sialic acid; Neu5Ac) to form pyruvate and N-acetylmannosamine (ManNAc) via a Schiff base intermediate. The chain is N-acetylneuraminate lyase from Escherichia coli (strain SE11).